Reading from the N-terminus, the 108-residue chain is Nucleoid-associated protein HEAR1046 (108 aa).

Residues 86–108 are disordered; that stretch reads TSQEKMAGATAGMPMPPGFKMPF. The segment covering 99-108 has biased composition (pro residues); sequence PMPPGFKMPF.

Belongs to the YbaB/EbfC family. Homodimer.

The protein resides in the cytoplasm. The protein localises to the nucleoid. Functionally, binds to DNA and alters its conformation. May be involved in regulation of gene expression, nucleoid organization and DNA protection. In Herminiimonas arsenicoxydans, this protein is Nucleoid-associated protein HEAR1046.